We begin with the raw amino-acid sequence, 205 residues long: Protein GrpE (205 aa).

The disordered stretch occupies residues 1–40 (MSRKLHEEELTPEGMDAAQNADPAGDPVSENEGALPAAEP).

It belongs to the GrpE family. In terms of assembly, homodimer.

The protein localises to the cytoplasm. In terms of biological role, participates actively in the response to hyperosmotic and heat shock by preventing the aggregation of stress-denatured proteins, in association with DnaK and GrpE. It is the nucleotide exchange factor for DnaK and may function as a thermosensor. Unfolded proteins bind initially to DnaJ; upon interaction with the DnaJ-bound protein, DnaK hydrolyzes its bound ATP, resulting in the formation of a stable complex. GrpE releases ADP from DnaK; ATP binding to DnaK triggers the release of the substrate protein, thus completing the reaction cycle. Several rounds of ATP-dependent interactions between DnaJ, DnaK and GrpE are required for fully efficient folding. The sequence is that of Protein GrpE from Acidobacterium capsulatum (strain ATCC 51196 / DSM 11244 / BCRC 80197 / JCM 7670 / NBRC 15755 / NCIMB 13165 / 161).